Here is a 240-residue protein sequence, read N- to C-terminus: Ubiquinone biosynthesis O-methyltransferase (240 aa).

4 residues coordinate S-adenosyl-L-methionine: Arg-44, Gly-64, Asp-85, and Met-129.

It belongs to the methyltransferase superfamily. UbiG/COQ3 family.

The catalysed reaction is a 3-demethylubiquinol + S-adenosyl-L-methionine = a ubiquinol + S-adenosyl-L-homocysteine + H(+). It catalyses the reaction a 3-(all-trans-polyprenyl)benzene-1,2-diol + S-adenosyl-L-methionine = a 2-methoxy-6-(all-trans-polyprenyl)phenol + S-adenosyl-L-homocysteine + H(+). It functions in the pathway cofactor biosynthesis; ubiquinone biosynthesis. O-methyltransferase that catalyzes the 2 O-methylation steps in the ubiquinone biosynthetic pathway. In Shigella flexneri serotype 5b (strain 8401), this protein is Ubiquinone biosynthesis O-methyltransferase.